The following is a 610-amino-acid chain: WD repeat-containing protein 46 (610 aa).

A disordered region spans residues 1 to 103 (METAPKPGKD…TQDPFPGPAP (103 aa)). Residues 7–19 (PGKDVPPKKDKLQ) are compositionally biased toward basic and acidic residues. Ser-41 carries the phosphoserine modification. The span at 65-77 (KKSRISKKPQVPK) shows a compositional bias: basic residues. 6 WD repeats span residues 193–234 (LRQF…CEIN), 235–272 (VMEAVRDIRFLHSEALLAVAQNRWLHIYDNQGIELHCI), 274–312 (RCDRVTRLEFLPFHFLLATASETGFLTYLDVSVGKIVAA), 315–354 (ARAGRLDVMSQNPYNAVIHLGHSNGTVSLWSPAMKEPLAK), 357–396 (CHRGGVRAVAVDSTGTYMATSGLDHQLKIFDLRGTYQPLS), and 399–436 (TLPHGAGHLAFSQRGLLVAGMGDVVNIWAGQGKASPPS). The disordered stretch occupies residues 538–610 (ERLGYDPQAK…RPSALDRFVR (73 aa)). Residues 572–582 (VMDEEHRDKVR) show a composition bias toward basic and acidic residues.

In terms of assembly, part of the small subunit (SSU) processome, composed of more than 70 proteins and the RNA chaperone small nucleolar RNA (snoRNA) U3. Interacts with DDX21, NCL, NOP2 and EBNA1BP2.

The protein resides in the nucleus. The protein localises to the nucleolus. Its function is as follows. Scaffold component of the nucleolar structure. Required for localization of DDX21 and NCL to the granular compartment of the nucleolus. Part of the small subunit (SSU) processome, first precursor of the small eukaryotic ribosomal subunit. During the assembly of the SSU processome in the nucleolus, many ribosome biogenesis factors, an RNA chaperone and ribosomal proteins associate with the nascent pre-rRNA and work in concert to generate RNA folding, modifications, rearrangements and cleavage as well as targeted degradation of pre-ribosomal RNA by the RNA exosome. The sequence is that of WD repeat-containing protein 46 (WDR46) from Homo sapiens (Human).